The following is a 212-amino-acid chain: Histidine biosynthesis bifunctional protein HisIE (212 aa).

Residues 1–109 form a phosphoribosyl-AMP cyclohydrolase region; the sequence is MRPDFHKQEL…ELIPFDDSDI (109 aa). The phosphoribosyl-ATP pyrophosphohydrolase stretch occupies residues 110–212; sequence FSELEKQIID…KKEFHTRTAD (103 aa).

It in the N-terminal section; belongs to the PRA-CH family. In the C-terminal section; belongs to the PRA-PH family.

It is found in the cytoplasm. The catalysed reaction is 1-(5-phospho-beta-D-ribosyl)-ATP + H2O = 1-(5-phospho-beta-D-ribosyl)-5'-AMP + diphosphate + H(+). It carries out the reaction 1-(5-phospho-beta-D-ribosyl)-5'-AMP + H2O = 1-(5-phospho-beta-D-ribosyl)-5-[(5-phospho-beta-D-ribosylamino)methylideneamino]imidazole-4-carboxamide. The protein operates within amino-acid biosynthesis; L-histidine biosynthesis; L-histidine from 5-phospho-alpha-D-ribose 1-diphosphate: step 2/9. It functions in the pathway amino-acid biosynthesis; L-histidine biosynthesis; L-histidine from 5-phospho-alpha-D-ribose 1-diphosphate: step 3/9. In Lactococcus lactis subsp. lactis (strain IL1403) (Streptococcus lactis), this protein is Histidine biosynthesis bifunctional protein HisIE (hisI).